We begin with the raw amino-acid sequence, 230 residues long: Uracil-DNA glycosylase (230 aa).

D70 (proton acceptor) is an active-site residue.

It belongs to the uracil-DNA glycosylase (UDG) superfamily. UNG family.

Its subcellular location is the cytoplasm. It carries out the reaction Hydrolyzes single-stranded DNA or mismatched double-stranded DNA and polynucleotides, releasing free uracil.. Functionally, excises uracil residues from the DNA which can arise as a result of misincorporation of dUMP residues by DNA polymerase or due to deamination of cytosine. This Pseudomonas syringae pv. syringae (strain B728a) protein is Uracil-DNA glycosylase.